The primary structure comprises 571 residues: Isthmin-2 (571 aa).

Residues 1-26 (MRALRDRAGLLLCVLLLAALLEAALG) form the signal peptide. Disordered regions lie at residues 30–60 (KKPR…LKEE), 116–141 (ANTT…LREE), and 257–294 (EKDR…DEEE). Over residues 116–131 (ANTTLSTPNPDTQASA) the composition is skewed to polar residues. N-linked (GlcNAc...) asparagine glycosylation occurs at Asn117. The span at 257-268 (EKDRAPGEKGEE) shows a compositional bias: basic and acidic residues. The span at 269–294 (KEEDEDYPSEDIEGEDQEDKEEDEEE) shows a compositional bias: acidic residues. Asn300 carries N-linked (GlcNAc...) asparagine glycosylation. The TSP type-1 domain maps to 327–371 (EPQKEWSPWSPCSGNCSTGKQQRTRPCGYGCTATETRTCDLPSCP). Disulfide bonds link Cys338-Cys365, Cys342-Cys370, and Cys353-Cys357. A glycan (N-linked (GlcNAc...) asparagine) is linked at Asn392. Residues 396–559 (MHDQDVDSCE…RACTDNPLEE (164 aa)) form the AMOP domain.

The protein belongs to the isthmin family. As to expression, expressed at high levels in the placenta and at moderate levels in the pancreas, kidney, heart, liver, lung, brain and skeletal muscle.

It is found in the secreted. In Homo sapiens (Human), this protein is Isthmin-2 (ISM2).